We begin with the raw amino-acid sequence, 247 residues long: DNA polymerase sliding clamp (247 aa).

It belongs to the PCNA family. As to quaternary structure, homotrimer. The subunits circularize to form a toroid; DNA passes through its center. Replication factor C (RFC) is required to load the toroid on the DNA.

Sliding clamp subunit that acts as a moving platform for DNA processing. Responsible for tethering the catalytic subunit of DNA polymerase and other proteins to DNA during high-speed replication. In Natronomonas pharaonis (strain ATCC 35678 / DSM 2160 / CIP 103997 / JCM 8858 / NBRC 14720 / NCIMB 2260 / Gabara) (Halobacterium pharaonis), this protein is DNA polymerase sliding clamp.